The following is a 72-amino-acid chain: Large ribosomal subunit protein bL31 (72 aa).

The Zn(2+) site is built by cysteine 16, cysteine 18, cysteine 38, and cysteine 41.

The protein belongs to the bacterial ribosomal protein bL31 family. Type A subfamily. In terms of assembly, part of the 50S ribosomal subunit. Requires Zn(2+) as cofactor.

In terms of biological role, binds the 23S rRNA. This chain is Large ribosomal subunit protein bL31, found in Aliivibrio fischeri (strain ATCC 700601 / ES114) (Vibrio fischeri).